Reading from the N-terminus, the 60-residue chain is Small ribosomal subunit protein bS21 (60 aa).

This sequence belongs to the bacterial ribosomal protein bS21 family.

The sequence is that of Small ribosomal subunit protein bS21 (rpsU) from Mycoplasma pneumoniae (strain ATCC 29342 / M129 / Subtype 1) (Mycoplasmoides pneumoniae).